Here is a 481-residue protein sequence, read N- to C-terminus: Hyaluronidase-4 (481 aa).

The Cytoplasmic portion of the chain corresponds to 1–11 (MQLLPEGQLRL). The helical transmembrane segment at 12-32 (CVFQPVHLTSGLLILFILKSI) threads the bilayer. Topologically, residues 33–455 (SSLKPARLPV…CREMTEASGP (423 aa)) are extracellular. Intrachain disulfides connect cysteine 59–cysteine 351, cysteine 223–cysteine 237, cysteine 376–cysteine 387, cysteine 381–cysteine 435, and cysteine 437–cysteine 446. 2 N-linked (GlcNAc...) asparagine glycosylation sites follow: asparagine 64 and asparagine 115. The active-site Proton donor is the glutamate 147. Asparagine 232 and asparagine 343 each carry an N-linked (GlcNAc...) asparagine glycan. The helical transmembrane segment at 456-476 (SGLSLSSSSVITLCLLVLAGY) threads the bilayer. The Cytoplasmic segment spans residues 477–481 (QSIQL).

Belongs to the glycosyl hydrolase 56 family.

It localises to the membrane. It catalyses the reaction Random hydrolysis of (1-&gt;4)-linkages between N-acetyl-beta-D-glucosamine and D-glucuronate residues in hyaluronate.. Endo-hyaluronidase that degrades hyaluronan to smaller oligosaccharide fragments. Also has chondroitin sulfate hydrolase activity, The best substrate being the galactosaminidic linkage in the sequence of a trisulfated tetrasaccharide. This is Hyaluronidase-4 (Hyal4) from Mus musculus (Mouse).